The primary structure comprises 309 residues: uncharacterized protein (309 aa).

In terms of domain architecture, S4 RNA-binding spans 11–87; sequence QRLDTFLATL…FPLDILYEDE (77 aa). Asp-131 is a catalytic residue.

It belongs to the pseudouridine synthase RluA family.

The catalysed reaction is a uridine in RNA = a pseudouridine in RNA. This is an uncharacterized protein from Mycoplasma pneumoniae (strain ATCC 29342 / M129 / Subtype 1) (Mycoplasmoides pneumoniae).